The sequence spans 421 residues: NAD-specific glutamate dehydrogenase (421 aa).

Residues lysine 70 and lysine 94 each coordinate substrate. The Proton donor role is filled by lysine 106. Threonine 191 and asparagine 222 together coordinate NAD(+). Serine 355 provides a ligand contact to substrate.

The protein belongs to the Glu/Leu/Phe/Val dehydrogenases family. Homohexamer.

The enzyme catalyses L-glutamate + NAD(+) + H2O = 2-oxoglutarate + NH4(+) + NADH + H(+). It functions in the pathway amino-acid degradation; L-glutamate degradation via hydroxyglutarate pathway; crotonoyl-CoA from L-glutamate: step 1/5. The polypeptide is NAD-specific glutamate dehydrogenase (Peptoniphilus asaccharolyticus (Peptostreptococcus asaccharolyticus)).